The chain runs to 361 residues: Phosphoribosylformylglycinamidine cyclo-ligase (361 aa).

It belongs to the AIR synthase family.

The protein localises to the cytoplasm. It carries out the reaction 2-formamido-N(1)-(5-O-phospho-beta-D-ribosyl)acetamidine + ATP = 5-amino-1-(5-phospho-beta-D-ribosyl)imidazole + ADP + phosphate + H(+). It participates in purine metabolism; IMP biosynthesis via de novo pathway; 5-amino-1-(5-phospho-D-ribosyl)imidazole from N(2)-formyl-N(1)-(5-phospho-D-ribosyl)glycinamide: step 2/2. This is Phosphoribosylformylglycinamidine cyclo-ligase from Bartonella quintana (strain Toulouse) (Rochalimaea quintana).